The chain runs to 148 residues: Ribonuclease pancreatic (148 aa).

A signal peptide spans 1 to 25 (MGLEKSLILFPLLVLVVGWVQPSLG). Substrate is bound by residues K32, R35, 65 to 69 (KPVNT), K90, and R109. Cystine bridges form between C50/C108, C64/C119, C82/C134, and C89/C96. The Proton donor role is filled by H143.

The protein belongs to the pancreatic ribonuclease family. As to quaternary structure, monomer. Interacts with and forms tight 1:1 complexes with RNH1. Dimerization of two such complexes may occur. Interaction with RNH1 inhibits this protein. As to expression, pancreas.

The protein localises to the secreted. It carries out the reaction an [RNA] containing cytidine + H2O = an [RNA]-3'-cytidine-3'-phosphate + a 5'-hydroxy-ribonucleotide-3'-[RNA].. The enzyme catalyses an [RNA] containing uridine + H2O = an [RNA]-3'-uridine-3'-phosphate + a 5'-hydroxy-ribonucleotide-3'-[RNA].. Functionally, endonuclease that catalyzes the cleavage of RNA on the 3' side of pyrimidine nucleotides. Acts on single-stranded and double-stranded RNA. The protein is Ribonuclease pancreatic (RNASE1) of Peromyscus leucopus (White-footed mouse).